The chain runs to 350 residues: THUMP domain-containing protein 1 (350 aa).

Polar residues predominate over residues 1-10 (MATTAQQSPQ). Disordered stretches follow at residues 1–42 (MATT…LEPG) and 75–96 (PEKF…DDAE). An N-acetylalanine modification is found at Ala2. Ser8, Ser86, Ser88, and Ser119 each carry phosphoserine. A THUMP domain is found at 147–254 (DMYKTKKKKT…KAVCCLSVVK (108 aa)). At Ser270 the chain carries Phosphoserine. Residues 270-292 (SAKDSQPHPKLGNGKEAKLEPDS) show a composition bias toward basic and acidic residues. Residues 270 to 350 (SAKDSQPHPK…VPKTNENELS (81 aa)) are disordered.

This sequence belongs to the THUMPD1 family. As to quaternary structure, interacts with NAT10. Binds tRNA.

Functionally, functions as a tRNA-binding adapter to mediate NAT10-dependent tRNA acetylation modifying cytidine to N4-acetylcytidine (ac4C). In Mus musculus (Mouse), this protein is THUMP domain-containing protein 1 (Thumpd1).